A 107-amino-acid polypeptide reads, in one-letter code: Nucleoid-associated protein Pnuc_0701 (107 aa).

The protein belongs to the YbaB/EbfC family. As to quaternary structure, homodimer.

The protein resides in the cytoplasm. It is found in the nucleoid. Its function is as follows. Binds to DNA and alters its conformation. May be involved in regulation of gene expression, nucleoid organization and DNA protection. The sequence is that of Nucleoid-associated protein Pnuc_0701 from Polynucleobacter asymbioticus (strain DSM 18221 / CIP 109841 / QLW-P1DMWA-1) (Polynucleobacter necessarius subsp. asymbioticus).